The sequence spans 369 residues: Transmembrane protein 144 homolog A (369 aa).

Helical transmembrane passes span Val-6–Val-26, Leu-35–Ile-55, Pro-63–Ile-83, Leu-85–Phe-105, Asp-122–Ile-142, Val-221–Met-241, Ile-256–Ala-276, Thr-288–Ile-308, Gly-318–Phe-338, and Leu-347–Ser-367.

It belongs to the TMEM144 family.

The protein localises to the membrane. This Dictyostelium discoideum (Social amoeba) protein is Transmembrane protein 144 homolog A (tmem144A).